The sequence spans 315 residues: FGFR1 oncogene partner 2 homolog (315 aa).

Coiled-coil stretches lie at residues 32–99 (EEAE…RAME) and 156–183 (VVQR…ISKQ). 2 disordered regions span residues 201-222 (KAVQ…SGAS) and 238-315 (PEQP…APAT). Positions 246 to 269 (GTTNSFNTAPVHSQSETQAPSVTL) are enriched in polar residues.

It belongs to the SIKE family.

The polypeptide is FGFR1 oncogene partner 2 homolog (Drosophila melanogaster (Fruit fly)).